The following is a 1155-amino-acid chain: Eukaryotic translation initiation factor 3 subunit A (1155 aa).

Positions 319–502 (LQRMAAHVLL…NSIYFGTDLT (184 aa)) constitute a PCI domain. Disordered stretches follow at residues 589 to 613 (QNNA…LAEQ) and 836 to 1155 (AAEA…VKRR). 4 stretches are compositionally biased toward basic and acidic residues: residues 836 to 900 (AAEA…RGGD), 925 to 987 (DRNE…EPDS), 1004 to 1057 (SRDD…DAAP), and 1066 to 1101 (DAPR…RAPK). Over residues 1104–1118 (GPSGGTGTAASGGGN) the composition is skewed to gly residues. The segment covering 1125 to 1145 (PRDEPAPKRDQPQDKENKAVD) has biased composition (basic and acidic residues).

It belongs to the eIF-3 subunit A family. Component of the eukaryotic translation initiation factor 3 (eIF-3) complex. The eIF-3 complex interacts with pix.

Its subcellular location is the cytoplasm. In terms of biological role, RNA-binding component of the eukaryotic translation initiation factor 3 (eIF-3) complex, which is involved in protein synthesis of a specialized repertoire of mRNAs and, together with other initiation factors, stimulates binding of mRNA and methionyl-tRNAi to the 40S ribosome. The eIF-3 complex specifically targets and initiates translation of a subset of mRNAs involved in cell proliferation. The protein is Eukaryotic translation initiation factor 3 subunit A of Drosophila pseudoobscura pseudoobscura (Fruit fly).